A 72-amino-acid chain; its full sequence is Translation initiation factor IF-1 2 (72 aa).

In terms of domain architecture, S1-like spans 1–72 (MAKDDVIQMQ…SRARIVFRTK (72 aa)).

It belongs to the IF-1 family. In terms of assembly, component of the 30S ribosomal translation pre-initiation complex which assembles on the 30S ribosome in the order IF-2 and IF-3, IF-1 and N-formylmethionyl-tRNA(fMet); mRNA recruitment can occur at any time during PIC assembly.

The protein resides in the cytoplasm. One of the essential components for the initiation of protein synthesis. Stabilizes the binding of IF-2 and IF-3 on the 30S subunit to which N-formylmethionyl-tRNA(fMet) subsequently binds. Helps modulate mRNA selection, yielding the 30S pre-initiation complex (PIC). Upon addition of the 50S ribosomal subunit IF-1, IF-2 and IF-3 are released leaving the mature 70S translation initiation complex. This is Translation initiation factor IF-1 2 from Cupriavidus necator (strain ATCC 17699 / DSM 428 / KCTC 22496 / NCIMB 10442 / H16 / Stanier 337) (Ralstonia eutropha).